A 347-amino-acid polypeptide reads, in one-letter code: UDP-3-O-acylglucosamine N-acyltransferase (347 aa).

Residue histidine 241 is the Proton acceptor of the active site.

This sequence belongs to the transferase hexapeptide repeat family. LpxD subfamily. As to quaternary structure, homotrimer.

The enzyme catalyses a UDP-3-O-[(3R)-3-hydroxyacyl]-alpha-D-glucosamine + a (3R)-hydroxyacyl-[ACP] = a UDP-2-N,3-O-bis[(3R)-3-hydroxyacyl]-alpha-D-glucosamine + holo-[ACP] + H(+). It functions in the pathway bacterial outer membrane biogenesis; LPS lipid A biosynthesis. Functionally, catalyzes the N-acylation of UDP-3-O-acylglucosamine using 3-hydroxyacyl-ACP as the acyl donor. Is involved in the biosynthesis of lipid A, a phosphorylated glycolipid that anchors the lipopolysaccharide to the outer membrane of the cell. This chain is UDP-3-O-acylglucosamine N-acyltransferase, found in Neisseria gonorrhoeae (strain ATCC 700825 / FA 1090).